Reading from the N-terminus, the 72-residue chain is Cytochrome c oxidase copper chaperone 2 (72 aa).

Cys-32 and Cys-33 together coordinate Cu cation. Positions 32–72 constitute a CHCH domain; the sequence is CCACPDTKKLRDECIVEHGESACTKWIEAHILCLRSEGFKV. 2 short sequence motifs (cx9C motif) span residues 35 to 45 and 54 to 64; these read CPDTKKLRDEC and CTKWIEAHILC. Intrachain disulfides connect Cys-35/Cys-64 and Cys-45/Cys-54.

The protein belongs to the COX17 family.

It localises to the mitochondrion intermembrane space. Copper chaperone for cytochrome c oxidase (COX). Binds 2 copper ions and delivers them to the Cu(A) site of COX. This Arabidopsis thaliana (Mouse-ear cress) protein is Cytochrome c oxidase copper chaperone 2 (COX17-2).